The sequence spans 144 residues: Large ribosomal subunit protein uL15 (144 aa).

The interval 1–54 (MRLNTLSPAEGSKKAGKRLGRGIGSGLGKTGGRGHKGQKSRSGGGVRRGFEGGQ) is disordered. Positions 21–31 (RGIGSGLGKTG) are enriched in gly residues.

It belongs to the universal ribosomal protein uL15 family. Part of the 50S ribosomal subunit.

Binds to the 23S rRNA. The protein is Large ribosomal subunit protein uL15 of Klebsiella pneumoniae (strain 342).